Reading from the N-terminus, the 296-residue chain is MSEKKIQLVIVTGMSGAGKTVAIQSFEDLGYFTIDNMPPTLVPKFLQLVEGTTDNDKLALVVDMRSRSFFLQIQNVLDELEQNENIDFKILFLDAADKELVARYKETRRSHPLAADGRILDGIKLERELLAPLKNLSQNVVDTTDLTPRELRKTISEQFSNQADMHSFRIEVMSFGFKYGLPLDADLVFDVRFLPNPYYKPELRNQTGLDKDVFDYVMNHAESEEFYKNLLGLIEPILPGYQKEGKSILTIAVGCTGGQHRSVAFAQRLADDLAKNWPVNSSHRDKNRRKETVNRS.

13–20 (GMSGAGKT) contacts ATP. 63 to 66 (DMRS) lines the GTP pocket. Positions 277–296 (WPVNSSHRDKNRRKETVNRS) are disordered. Over residues 282–296 (SHRDKNRRKETVNRS) the composition is skewed to basic and acidic residues.

This sequence belongs to the RapZ-like family.

Its function is as follows. Displays ATPase and GTPase activities. The chain is Nucleotide-binding protein SSA_0810 from Streptococcus sanguinis (strain SK36).